The sequence spans 500 residues: ADP,ATP carrier protein 5 (500 aa).

Transmembrane regions (helical) follow at residues 21 to 41 (IYNYELGKFIPMSALMFCILF), 62 to 82 (IAGFAKVYCVTPAAALFVIIY), 94 to 114 (IFYYLTAFFIGFFVLFAFVIY), 149 to 169 (YIVYYSLAELWPNIFYVLLFW), 184 to 204 (FYTLFSLFGNSSLILVGFLMM), 224 to 244 (ITLVQISTILVTIVAVICCLL), 287 to 307 (LWLLLICSAAFGFAINLVEAV), 328 to 348 (LYILWTGVAIMVMTIIGNNVM), 357 to 377 (AVISPVIIMVTGVLFFVLIVF), 381 to 401 (ILSLFDGAILMSPLALAVSIG), and 469 to 489 (SISPVLMVVFTFVCLAWIYAV).

The protein belongs to the ADP/ATP translocase tlc family.

It is found in the cell membrane. Functionally, provides the rickettsial cell with host ATP in exchange for rickettsial ADP. This is an obligate exchange system. This energy acquiring activity is an important component of rickettsial parasitism. This Rickettsia bellii (strain RML369-C) protein is ADP,ATP carrier protein 5 (tlcE).